The following is a 237-amino-acid chain: uncharacterized protein (237 aa).

Residues Gly213–Gly237 form a disordered region. The span at Asn223–Gly237 shows a compositional bias: low complexity.

This is an uncharacterized protein from Methanothermobacter thermautotrophicus (Methanobacterium thermoformicicum).